Consider the following 483-residue polypeptide: MTVRVRIAPSPTGNLHIGTARTAVFNWLFARHTGGTFILRVEDTDLERSKAEYTENIQSGLQWLGLNWDEGPFFQTQRLDHYRKAIQQLLDQGLAYRCYCTSEELEQMREAQKAKNQAPRYDNRHRNLTPDQEQALRAEGRQPVIRFRIDDDRQIVWQDQIRGQVVWQGSDLGGDMVIARASENPEEAFGQPLYNLAVVVDDIDMAITHVIRGEDHIANTAKQILLYEALGGAVPTFAHTPLILNQEGKKLSKRDGVTSIDDFRAMGFLPQAIANYMCLLGWTPPDSTQEIFTLAEAAEQFSLERVNKAGAKFDWQKLDWINSQYLHALPAAELVPLLIPHLEAGGHQVDPDRDQAWLVGLATLIGPSLTRLTDAATESQLLFGDRLELKEDGQKQLAVEGAKAVLEAALTFSQNTPELTLDEAKGEINRLTKELGLKKGVVMKSLRAGLMGTVQGPDLLQSWLLLQQKGWATTRLTQAIAAE.

Positions 9–19 match the 'HIGH' region motif; that stretch reads PSPTGNLHIGT. The 'KMSKS' region signature appears at 250-254; sequence KLSKR. Lysine 253 is a binding site for ATP.

It belongs to the class-I aminoacyl-tRNA synthetase family. Glutamate--tRNA ligase type 1 subfamily. Monomer.

It localises to the cytoplasm. The catalysed reaction is tRNA(Glu) + L-glutamate + ATP = L-glutamyl-tRNA(Glu) + AMP + diphosphate. Functionally, catalyzes the attachment of glutamate to tRNA(Glu) in a two-step reaction: glutamate is first activated by ATP to form Glu-AMP and then transferred to the acceptor end of tRNA(Glu). The polypeptide is Glutamate--tRNA ligase (Synechocystis sp. (strain ATCC 27184 / PCC 6803 / Kazusa)).